The sequence spans 332 residues: UPF0285 protein MK0078 (332 aa).

It belongs to the UPF0285 family.

The sequence is that of UPF0285 protein MK0078 from Methanopyrus kandleri (strain AV19 / DSM 6324 / JCM 9639 / NBRC 100938).